We begin with the raw amino-acid sequence, 344 residues long: DNA-directed RNA polymerase subunit alpha (344 aa).

The alpha N-terminal domain (alpha-NTD) stretch occupies residues 1–239 (MADHWNKLTR…DQLQSFISFD (239 aa)). The alpha C-terminal domain (alpha-CTD) stretch occupies residues 254–344 (VLPYDHNLLR…ENLSKQYSED (91 aa)).

Belongs to the RNA polymerase alpha chain family. Homodimer. The RNAP catalytic core consists of 2 alpha, 1 beta, 1 beta' and 1 omega subunit. When a sigma factor is associated with the core the holoenzyme is formed, which can initiate transcription.

It catalyses the reaction RNA(n) + a ribonucleoside 5'-triphosphate = RNA(n+1) + diphosphate. DNA-dependent RNA polymerase catalyzes the transcription of DNA into RNA using the four ribonucleoside triphosphates as substrates. This is DNA-directed RNA polymerase subunit alpha from Anaplasma phagocytophilum (strain HZ).